The primary structure comprises 188 residues: Mediator of RNA polymerase II transcription subunit 29 (188 aa).

Low complexity-rich tracts occupy residues 1–23 (MNPN…QSSP) and 30–43 (VQHQ…PLQQ). Residues 1 to 43 (MNPNMNMMPMSGPQMMQVMQSSPSGPPGPVQHQQQQPPQPLQQ) form a disordered region.

The protein belongs to the Mediator complex subunit 29 family. As to quaternary structure, component of the Mediator complex. Self-associates. Interacts with dsx.

Its subcellular location is the nucleus. In terms of biological role, component of the Mediator complex, a coactivator involved in the regulated transcription of nearly all RNA polymerase II-dependent genes. Mediator functions as a bridge to convey information from gene-specific regulatory proteins to the basal RNA polymerase II transcription machinery. Mediator is recruited to promoters by direct interactions with regulatory proteins and serves as a scaffold for the assembly of a functional preinitiation complex with RNA polymerase II and the general transcription factors. Required for female somatic sexual development. This chain is Mediator of RNA polymerase II transcription subunit 29 (ix), found in Drosophila melanogaster (Fruit fly).